The sequence spans 321 residues: Quinol oxidase subunit 2 (321 aa).

Residues 1–25 form the signal peptide; that stretch reads MIFLFRALKPLLVLALLTVVFVLGG. The N-palmitoyl cysteine moiety is linked to residue cysteine 26. Residue cysteine 26 is the site of S-diacylglycerol cysteine attachment. 2 helical membrane passes run 49-69 and 90-110; these read SIGF…IILV and TFLE…LSVP. Residues 294 to 321 form a disordered region; that stretch reads QAVSPHSKTDPFENVKENEFKKSDDTEE. A compositionally biased stretch (basic and acidic residues) spans 300 to 321; sequence SKTDPFENVKENEFKKSDDTEE.

This sequence belongs to the cytochrome c oxidase subunit 2 family.

The protein resides in the cell membrane. It catalyses the reaction 2 a quinol + O2 = 2 a quinone + 2 H2O. Its function is as follows. Catalyzes quinol oxidation with the concomitant reduction of oxygen to water. Major component for energy conversion during vegetative growth. Subunit II transfers the electrons from a quinol to the binuclear center of the catalytic subunit I. This Bacillus spizizenii (strain ATCC 23059 / NRRL B-14472 / W23) (Bacillus subtilis subsp. spizizenii) protein is Quinol oxidase subunit 2 (qoxA).